Consider the following 155-residue polypeptide: Probable calcium-binding protein CML9 (155 aa).

EF-hand domains are found at residues 8-43 (EQVD…LGQN), 86-121 (ATEK…HGDR), and 122-155 (LTEE…MNNK). Residues Asp-21, Asp-23, Asp-25, Arg-27, and Glu-32 each contribute to the Ca(2+) site.

In terms of biological role, potential calcium sensor. The protein is Probable calcium-binding protein CML9 (CML9) of Oryza sativa subsp. japonica (Rice).